Here is a 224-residue protein sequence, read N- to C-terminus: tRNA (guanine-N(7)-)-methyltransferase (224 aa).

Glu57, Asp82, and Asp109 together coordinate S-adenosyl-L-methionine. Asp167 is a binding site for substrate.

This sequence belongs to the class I-like SAM-binding methyltransferase superfamily. TrmB family.

It carries out the reaction guanosine(46) in tRNA + S-adenosyl-L-methionine = N(7)-methylguanosine(46) in tRNA + S-adenosyl-L-homocysteine. The protein operates within tRNA modification; N(7)-methylguanine-tRNA biosynthesis. Functionally, catalyzes the formation of N(7)-methylguanine at position 46 (m7G46) in tRNA. This Chloroflexus aurantiacus (strain ATCC 29366 / DSM 635 / J-10-fl) protein is tRNA (guanine-N(7)-)-methyltransferase.